A 214-amino-acid chain; its full sequence is Adenylate kinase (214 aa).

Gly-14–Thr-19 is a binding site for ATP. Positions Ser-34 to Val-63 are NMP. Residues Ser-35, Arg-40, Leu-61–Val-63, Gly-89–Arg-92, and Gln-96 contribute to the AMP site. The tract at residues Ser-130–Asp-163 is LID. Arg-131 contacts ATP. Zn(2+) is bound by residues Cys-134 and Cys-137. Position 140 to 141 (Val-140 to Tyr-141) interacts with ATP. Zn(2+)-binding residues include Cys-150 and Cys-153. The AMP site is built by Arg-160 and Arg-171. Thr-199 contacts ATP.

Belongs to the adenylate kinase family. As to quaternary structure, monomer.

It localises to the cytoplasm. It carries out the reaction AMP + ATP = 2 ADP. It functions in the pathway purine metabolism; AMP biosynthesis via salvage pathway; AMP from ADP: step 1/1. Functionally, catalyzes the reversible transfer of the terminal phosphate group between ATP and AMP. Plays an important role in cellular energy homeostasis and in adenine nucleotide metabolism. This is Adenylate kinase from Chlamydia caviae (strain ATCC VR-813 / DSM 19441 / 03DC25 / GPIC) (Chlamydophila caviae).